Consider the following 326-residue polypeptide: Apoptosis facilitator Bcl-2-like protein 14 (326 aa).

Ser44 is subject to Phosphoserine. Positions 100–147 (AEKEEDSQSSPPEICAQAQRSGVPQARPRSPKWPRSRSSMDQRLEHKA) are disordered. Basic and acidic residues predominate over residues 137–147 (SSMDQRLEHKA). A BH3 motif is present at residues 211–225 (IVELLKYSGEQLERE). Residues 307-314 (WIQQHGGW) carry the BH2 motif.

The protein belongs to the Bcl-2 family. Post-translationally, phosphorylated by MELK, leading to inhibit its pro-apoptotic function.

It localises to the cytoplasm. In terms of biological role, plays a role in apoptosis. The chain is Apoptosis facilitator Bcl-2-like protein 14 (BCL2L14) from Bos taurus (Bovine).